The following is a 107-amino-acid chain: Protein p13 MTCP-1 (107 aa).

It belongs to the TCL1 family. In terms of assembly, interacts with AKT1 and AKT2 (via PH domain). Does not interact with AKT3. In terms of tissue distribution, not found at a significant level in any tissue.

Enhances the phosphorylation and activation of AKT1 and AKT2. The polypeptide is Protein p13 MTCP-1 (MTCP1) (Homo sapiens (Human)).